The primary structure comprises 309 residues: Porphobilinogen deaminase (309 aa).

Position 241 is an S-(dipyrrolylmethanemethyl)cysteine (cysteine 241).

It belongs to the HMBS family. In terms of assembly, monomer. It depends on dipyrromethane as a cofactor.

The catalysed reaction is 4 porphobilinogen + H2O = hydroxymethylbilane + 4 NH4(+). It functions in the pathway porphyrin-containing compound metabolism; protoporphyrin-IX biosynthesis; coproporphyrinogen-III from 5-aminolevulinate: step 2/4. Tetrapolymerization of the monopyrrole PBG into the hydroxymethylbilane pre-uroporphyrinogen in several discrete steps. In Bacillus cereus (strain AH820), this protein is Porphobilinogen deaminase.